The primary structure comprises 79 residues: Cell division protein ZapB (79 aa).

Residues 4 to 78 (EVFEKLEAKV…LRALLGKMEE (75 aa)) adopt a coiled-coil conformation.

Belongs to the ZapB family. Homodimer. The ends of the coiled-coil dimer bind to each other, forming polymers. Interacts with FtsZ.

It localises to the cytoplasm. Its function is as follows. Non-essential, abundant cell division factor that is required for proper Z-ring formation. It is recruited early to the divisome by direct interaction with FtsZ, stimulating Z-ring assembly and thereby promoting cell division earlier in the cell cycle. Its recruitment to the Z-ring requires functional FtsA or ZipA. The sequence is that of Cell division protein ZapB from Pectobacterium atrosepticum (strain SCRI 1043 / ATCC BAA-672) (Erwinia carotovora subsp. atroseptica).